Reading from the N-terminus, the 497-residue chain is Probable malate:quinone oxidoreductase (497 aa).

It belongs to the MQO family. The cofactor is FAD.

It carries out the reaction (S)-malate + a quinone = a quinol + oxaloacetate. It functions in the pathway carbohydrate metabolism; tricarboxylic acid cycle; oxaloacetate from (S)-malate (quinone route): step 1/1. This is Probable malate:quinone oxidoreductase from Prochlorococcus marinus (strain MIT 9515).